Consider the following 142-residue polypeptide: Hemoglobin subunit alpha (142 aa).

Positions 2-142 (VLSADDKANI…VSTVLTSKYR (141 aa)) constitute a Globin domain. Serine 4 is subject to Phosphoserine. Residues lysine 8 and lysine 12 each carry the N6-succinyllysine modification. Residue lysine 17 is modified to N6-acetyllysine; alternate. Lysine 17 carries the post-translational modification N6-succinyllysine; alternate. The residue at position 25 (tyrosine 25) is a Phosphotyrosine. The residue at position 36 (serine 36) is a Phosphoserine. Lysine 41 is modified (N6-succinyllysine). Position 50 is a phosphoserine (serine 50). Histidine 59 lines the O2 pocket. Residue histidine 88 participates in heme b binding. Residue threonine 109 is modified to Phosphothreonine. Serine 125 and serine 132 each carry phosphoserine. Phosphothreonine occurs at positions 135 and 138. Serine 139 bears the Phosphoserine mark.

This sequence belongs to the globin family. Heterotetramer of two alpha chains and two beta chains. Red blood cells.

Its function is as follows. Involved in oxygen transport from the lung to the various peripheral tissues. Functionally, hemopressin acts as an antagonist peptide of the cannabinoid receptor CNR1. Hemopressin-binding efficiently blocks cannabinoid receptor CNR1 and subsequent signaling. This Cricetomys gambianus (Northern giant pouched rat) protein is Hemoglobin subunit alpha (HBA).